The following is a 100-amino-acid chain: Protein RADIALIS-like 1 (100 aa).

The 56-residue stretch at 9–64 folds into the SANT domain; the sequence is QSSGSWTAKQNKAFEQALATYDQDTPNRWQNVAKVVGGKTTEEVKRHYELLVQDIN. The tract at residues 73–100 is disordered; sequence FPNYRTSGGCTNGRLSQEEKRMRNMRLQ. Positions 76 to 87 are enriched in polar residues; sequence YRTSGGCTNGRL.

It localises to the nucleus. Probable transcription factor. This Arabidopsis thaliana (Mouse-ear cress) protein is Protein RADIALIS-like 1 (RL1).